Here is a 951-residue protein sequence, read N- to C-terminus: Valine--tRNA ligase (951 aa).

A 'HIGH' region motif is present at residues 42–52; that stretch reads PNVTGSLHMGH. The 'KMSKS' region signature appears at 554–558; it reads KMSKS. K557 lines the ATP pocket. Residues 880-944 adopt a coiled-coil conformation; the sequence is AGLINKEDEL…AEAKAKLIEQ (65 aa).

This sequence belongs to the class-I aminoacyl-tRNA synthetase family. ValS type 1 subfamily. Monomer.

The protein resides in the cytoplasm. The catalysed reaction is tRNA(Val) + L-valine + ATP = L-valyl-tRNA(Val) + AMP + diphosphate. In terms of biological role, catalyzes the attachment of valine to tRNA(Val). As ValRS can inadvertently accommodate and process structurally similar amino acids such as threonine, to avoid such errors, it has a 'posttransfer' editing activity that hydrolyzes mischarged Thr-tRNA(Val) in a tRNA-dependent manner. The chain is Valine--tRNA ligase from Salmonella paratyphi A (strain ATCC 9150 / SARB42).